Consider the following 448-residue polypeptide: T-box transcription factor TBX19 (448 aa).

A DNA-binding region (T-box) is located at residues 45–218; sequence LEDAPLWQRF…YNPFAKAFLD (174 aa).

Its subcellular location is the nucleus. In terms of biological role, transcriptional regulator involved in developmental processes. Can activate POMC gene expression and repress the alpha glycoprotein subunit and thyroid-stimulating hormone beta promoters. The sequence is that of T-box transcription factor TBX19 from Homo sapiens (Human).